Here is a 120-residue protein sequence, read N- to C-terminus: Large ribosomal subunit protein eL8 (120 aa).

This sequence belongs to the eukaryotic ribosomal protein eL8 family. Part of the 50S ribosomal subunit. Probably part of the RNase P complex.

The protein resides in the cytoplasm. Functionally, multifunctional RNA-binding protein that recognizes the K-turn motif in ribosomal RNA, the RNA component of RNase P, box H/ACA, box C/D and box C'/D' sRNAs. The polypeptide is Large ribosomal subunit protein eL8 (Haloquadratum walsbyi (strain DSM 16790 / HBSQ001)).